A 109-amino-acid polypeptide reads, in one-letter code: Transmembrane protein 233 (109 aa).

Positions 1-30 are disordered; that stretch reads MSQYAPSPDFKRALDSSPEANTEDDKTEED. Topologically, residues 1–41 are cytoplasmic; the sequence is MSQYAPSPDFKRALDSSPEANTEDDKTEEDVPMPKNYLWLT. The span at 21-30 shows a compositional bias: acidic residues; sequence NTEDDKTEED. An intramembrane region (helical) is located at residues 42–62; the sequence is IVSCFCPAYPINIVALVFSIM. Residues 63 to 84 are Cytoplasmic-facing; it reads SLNSYNDGDYEGARRLGRNAKW. Residues 85 to 105 traverse the membrane as a helical segment; that stretch reads VAIASIIIGLLIIGISCAVHF. Over 106 to 109 the chain is Extracellular; that stretch reads TRNA.

The protein belongs to the CD225/Dispanin family. As to quaternary structure, interacts with the giant stinging tree toxin ExTxA (AC P0DQP3). Interacts with Nav1.7/SCN9A. Interacts with Nav1.1/SCN1A, Nav1.2/SCN2A, Nav1.3/SCN3A, Nav1.4/SCN4A, Nav1.5/SCN5A, and Nav1.6/SCN8A.

It is found in the cell membrane. Its function is as follows. Probable accessory protein of voltage-gated sodium channels. In Homo sapiens (Human), this protein is Transmembrane protein 233.